A 528-amino-acid polypeptide reads, in one-letter code: Tubulin-specific chaperone E (528 aa).

Residues 27–71 (GLVPPVAGLWLGVEWDNPERGKHDGSHEGTVYFKCRHPTAGSFIR) enclose the CAP-Gly domain. LRR repeat units follow at residues 152 to 176 (CPNI…DIAD), 178 to 206 (LKHL…TFPT), 207 to 229 (LKVL…ASGW), 231 to 253 (VLEK…DVLQ), 254 to 274 (TVKL…LFLI), 279 to 300 (RLEQ…DAGI), and 309 to 330 (SLQY…NELD). One can recognise an LRRCT domain in the interval 343–385 (NPLTEGSKDAQTTRQFIIARIGQLRTLNKCAIEPEERRGAELD). Lys-464 carries the post-translational modification N6-acetyllysine. Ser-496 is subject to Phosphoserine.

This sequence belongs to the TBCE family. In terms of assembly, supercomplex made of cofactors A to E. Cofactors A and D function by capturing and stabilizing tubulin in a quasi-native conformation. Cofactor E binds to the cofactor D-tubulin complex; interaction with cofactor C then causes the release of tubulin polypeptides that are committed to the native state. Cofactors B and E can form a heterodimer which binds to alpha-tubulin and enhances their ability to dissociate tubulin heterodimers. Interacts with TBCD.

It is found in the cytoplasm. The protein localises to the cytoskeleton. Functionally, tubulin-folding protein; involved in the second step of the tubulin folding pathway and in the regulation of tubulin heterodimer dissociation. Required for correct organization of microtubule cytoskeleton and mitotic splindle, and maintenance of the neuronal microtubule network. This chain is Tubulin-specific chaperone E (TBCE), found in Bos taurus (Bovine).